We begin with the raw amino-acid sequence, 160 residues long: SsrA-binding protein (160 aa).

Residues 131-160 form a disordered region; sequence KKEYDKRHTERERDSDRELQRAVRSKGKDD.

It belongs to the SmpB family.

It is found in the cytoplasm. Its function is as follows. Required for rescue of stalled ribosomes mediated by trans-translation. Binds to transfer-messenger RNA (tmRNA), required for stable association of tmRNA with ribosomes. tmRNA and SmpB together mimic tRNA shape, replacing the anticodon stem-loop with SmpB. tmRNA is encoded by the ssrA gene; the 2 termini fold to resemble tRNA(Ala) and it encodes a 'tag peptide', a short internal open reading frame. During trans-translation Ala-aminoacylated tmRNA acts like a tRNA, entering the A-site of stalled ribosomes, displacing the stalled mRNA. The ribosome then switches to translate the ORF on the tmRNA; the nascent peptide is terminated with the 'tag peptide' encoded by the tmRNA and targeted for degradation. The ribosome is freed to recommence translation, which seems to be the essential function of trans-translation. The protein is SsrA-binding protein of Pseudomonas syringae pv. syringae (strain B728a).